The chain runs to 528 residues: GMP synthase [glutamine-hydrolyzing] (528 aa).

In terms of domain architecture, Glutamine amidotransferase type-1 spans 3–199 (KVAIIDFGSQ…FLDIAGCQKD (197 aa)). Cys83 serves as the catalytic Nucleophile. Active-site residues include His174 and Glu176. One can recognise a GMPS ATP-PPase domain in the interval 200-394 (WTVTSFIDDQ…LGISTEILMR (195 aa)). ATP is bound at residue 227-233 (SGGVDSS).

As to quaternary structure, homodimer.

The enzyme catalyses XMP + L-glutamine + ATP + H2O = GMP + L-glutamate + AMP + diphosphate + 2 H(+). It participates in purine metabolism; GMP biosynthesis; GMP from XMP (L-Gln route): step 1/1. Functionally, catalyzes the synthesis of GMP from XMP. The sequence is that of GMP synthase [glutamine-hydrolyzing] from Ehrlichia ruminantium (strain Gardel).